Consider the following 88-residue polypeptide: HssA/B-like protein 13 (88 aa).

It belongs to the hssA/B family.

The chain is HssA/B-like protein 13 (hssl13) from Dictyostelium discoideum (Social amoeba).